Here is a 290-residue protein sequence, read N- to C-terminus: Fat storage-inducing transmembrane protein 1 (290 aa).

The next 5 helical transmembrane spans lie at Met1–Thr21, His26–Ser46, Ser65–Val85, Leu173–Leu193, and Ile205–Leu225.

This sequence belongs to the FIT family. FIT1 subfamily.

It is found in the endoplasmic reticulum membrane. In terms of biological role, may play an important role in the formation of lipid droplets (LDs) which are storage organelles at the center of lipid and energy homeostasis. May directly bind to diacylglycerol (DAGs) and triacylglycerol. The sequence is that of Fat storage-inducing transmembrane protein 1 (fitm1l) from Danio rerio (Zebrafish).